The primary structure comprises 708 residues: MTAEPNKPCQIKRDYQQLINLYPATAHTDAHYLSKLSIYQQRVFEAHSQQKLLILGQIGLGNGLELLSWWRTQANPSQRLLLKVFEPNPINAYELKSLWDQSLTLVKETPFEPHLESKQASALECKSKLSQLAQTLLDAEPTAIIGCQRLIFDDGRTTIDLHFGDIQTQLSSLTHSPMHPVQHWLILPHLLQALYHQSQWQMAKLSDDSATIATIGLSESSELSETTVNRFQACGFTVSDINELGTKALGIHQPVTLINHQPDAVLLHERQVLRQQDAKAYAFNPMAAILSSPTQSSIAIIGGGLASAHLTLSLAERGQGAQVFCKDAELGQGASGNRQGAIYPLLTTENDELSRFFQQAFLFSRRRVQALTSAPADNQTPISHNFCGVLQTAHDERSQLRLDKIIQGQPWPSEIAYAVDAEQANAIAKINLDKPGFFYPLGGWVCPFEYADAAIQKAMQLADVSVSLNTDILAIERQADGWVLLTEKERFGPFAQLVLANGAELTQFDASNKLQISPFRGQVSHVPAQFQLSQLATVLCANGYLTPSHQGLHCLGASYVKEPEHLDFCSQEQQENLMKMHESYPNQSWLEDIDMSGNNARIGVRMVTRDHFPMMGCAPDVAKILEDYEQHQLTKESRHYWQTTPAPVHQGLYILGGLGSRGLSSGPLAAECLAAQLCGEPIPLDKETLCKLNPNRMWLRKLLKGKAL.

The tract at residues 1–278 (MTAEPNKPCQ…ERQVLRQQDA (278 aa)) is tRNA (mnm(5)s(2)U34)-methyltransferase. Residues 301–708 (IGGGLASAHL…LRKLLKGKAL (408 aa)) form an FAD-dependent cmnm(5)s(2)U34 oxidoreductase region.

The protein in the N-terminal section; belongs to the methyltransferase superfamily. tRNA (mnm(5)s(2)U34)-methyltransferase family. It in the C-terminal section; belongs to the DAO family. The cofactor is FAD.

It is found in the cytoplasm. It catalyses the reaction 5-aminomethyl-2-thiouridine(34) in tRNA + S-adenosyl-L-methionine = 5-methylaminomethyl-2-thiouridine(34) in tRNA + S-adenosyl-L-homocysteine + H(+). Its function is as follows. Catalyzes the last two steps in the biosynthesis of 5-methylaminomethyl-2-thiouridine (mnm(5)s(2)U) at the wobble position (U34) in tRNA. Catalyzes the FAD-dependent demodification of cmnm(5)s(2)U34 to nm(5)s(2)U34, followed by the transfer of a methyl group from S-adenosyl-L-methionine to nm(5)s(2)U34, to form mnm(5)s(2)U34. The chain is tRNA 5-methylaminomethyl-2-thiouridine biosynthesis bifunctional protein MnmC from Shewanella baltica (strain OS195).